Consider the following 435-residue polypeptide: Galactomannan galactosyltransferase 1 (435 aa).

Topologically, residues 1-20 (MAKFGSRNKSPKWISNGCCF) are cytoplasmic. A helical; Signal-anchor for type II membrane protein transmembrane segment spans residues 21–41 (LLGAFTALLLLWGLCSFIIPI). The Lumenal portion of the chain corresponds to 42 to 435 (PNTDPKLNSV…SPLPFGYPAA (394 aa)). N-linked (GlcNAc...) asparagine glycosylation is found at asparagine 230 and asparagine 328. Residues 321–354 (EIVKTYENISERYDEVERKVEGLRRRHAEKVSEK) adopt a coiled-coil conformation.

It belongs to the glycosyltransferase 34 family.

The protein localises to the golgi apparatus membrane. Its function is as follows. Galactomannan galactosyltransferase (GMGT) involved in galactomannan biosynthesis in seed endosperm. GMGT specificity is an important factor regulating the distribution and amount of alpha-1,6-galactose (Gal) substitution of the beta-1,4-linked mannan backbone. This chain is Galactomannan galactosyltransferase 1 (GMGT1), found in Cyamopsis tetragonoloba (Guar).